We begin with the raw amino-acid sequence, 306 residues long: uncharacterized protein (306 aa).

The Proton acceptor role is filled by D204.

The protein belongs to the aminoglycoside phosphotransferase family.

This is an uncharacterized protein from Bacillus subtilis (strain 168).